Reading from the N-terminus, the 496-residue chain is COP9 signalosome complex subunit 3 (496 aa).

Residues 243 to 411 (QASHCLGIVI…GNETTTMLRF (169 aa)) form the PCI domain. The interval 468–496 (GSSERSGVVGSTEADGGGDLDEDLMGDGR) is disordered. The segment covering 483–496 (GGGDLDEDLMGDGR) has biased composition (acidic residues).

It belongs to the CSN3 family. In terms of assembly, component of the COP9 signalosome (CSN) complex.

The protein resides in the cytoplasm. Its subcellular location is the nucleus. Functionally, component of the COP9 signalosome (CSN) complex that acts as an regulator of the ubiquitin (Ubl) conjugation pathway by mediating the deneddylation of the cullin subunit of SCF-type E3 ubiquitin-protein ligase complexes. The CSN complex seems to link protein degradation to sexual development. In Emericella nidulans (strain FGSC A4 / ATCC 38163 / CBS 112.46 / NRRL 194 / M139) (Aspergillus nidulans), this protein is COP9 signalosome complex subunit 3 (csnC).